The sequence spans 223 residues: Ubiquinone biosynthesis protein COQ4 homolog 2, mitochondrial (223 aa).

Residues 1 to 26 (MFLRRVHPVRLGHAIQRSLTTTKSRN) constitute a mitochondrion transit peptide. The span at 21–32 (TTKSRNESTTTT) shows a compositional bias: low complexity. The segment at 21 to 43 (TTKSRNESTTTTVEAPQAVPSPP) is disordered. Residues histidine 177, aspartate 178, histidine 181, and glutamate 193 each contribute to the Zn(2+) site.

Belongs to the COQ4 family. Component of a multi-subunit COQ enzyme complex. Zn(2+) serves as cofactor.

The protein resides in the mitochondrion inner membrane. It carries out the reaction a 4-hydroxy-3-methoxy-5-(all-trans-polyprenyl)benzoate + H(+) = a 2-methoxy-6-(all-trans-polyprenyl)phenol + CO2. Its pathway is cofactor biosynthesis; ubiquinone biosynthesis. Lyase that catalyzes the C1-decarboxylation of 4-hydroxy-3-methoxy-5-(all-trans-polyprenyl)benzoic acid into 2-methoxy-6-(all-trans-polyprenyl)phenol during ubiquinone biosynthesis. In Culex quinquefasciatus (Southern house mosquito), this protein is Ubiquinone biosynthesis protein COQ4 homolog 2, mitochondrial.